Consider the following 678-residue polypeptide: WD repeat-containing protein 48 (678 aa).

8 WD repeats span residues tyrosine 28–tyrosine 67, histidine 73–threonine 112, threonine 115–alanine 154, glycine 166–lysine 205, glycine 208–threonine 247, valine 250–leucine 289, glutamate 292–serine 334, and lysine 358–aspartate 397. The segment at valine 608–glutamate 629 is disordered. Low complexity predominate over residues threonine 610 to glutamate 621.

It belongs to the WD repeat WDR48 family.

It is found in the nucleus. It localises to the cytoplasm. Its subcellular location is the lysosome. The protein localises to the late endosome. In terms of biological role, regulator of deubiquitinating complexes, which acts as a strong activator of usp1, usp12 and usp46. Enhances the usp1-mediated deubiquitination of fancd2; usp1 being almost inactive by itself. Activates deubiquitination by increasing the catalytic turnover without increasing the affinity of deubiquitinating enzymes for the substrate. Also activates deubiquitinating activity of complexes containing usp12. Together with rad51ap1, promotes DNA repair by stimulating rad51-mediated homologous recombination. Binds single-stranded DNA (ssDNA) and double-stranded DNA (dsDNA). DNA-binding is required both for usp1-mediated deubiquitination of fancd2 and stimulation of rad51-mediated homologous recombination: both wdr48/uaf1 and rad51ap1 have coordinated role in DNA-binding during these processes. Together with atad5 and by regulating usp1 activity, has a role in pcna-mediated translesion synthesis (TLS) by deubiquitinating monoubiquitinated pcna. Together with atad5, has a role in recruiting rad51 to stalled forks during replication stress. This is WD repeat-containing protein 48 (wdr48) from Xenopus tropicalis (Western clawed frog).